A 494-amino-acid chain; its full sequence is MIKFALALTLCLAGASLSLAQHNPRWWGNRNTIVHLFEWKWSDIAEECETFLAPRGFAGVQVSPVNENIISAGRPWWERYQPISYKLTTRSGNEEEFADMVRRCNDVGIRIYVDVLLNHMSGDFDGVAVGTAGTEAEPSKKSFPGVPYTAQDFHPSCEITDWNNRFQVQECELVGLKDLNQHSDYVRSKLIEFLDHLIELGVAGFRVDAAKHMAAVDLEYIYGSLSNLNIEHGFPHNARPFIFQEVIDHGHETVSREEYNELGAVTEFRFSEEIGKAFRGNNALKWLQSWGTDWGFLNSDQALTFVDNHDNQRDQGSVLNYKSPRQYKMATAFHLAYPYGISRVMSSFAFDDHDTPPPQDAQENIISPEFDEDGACVNGWICEHRWRQIYAMVGFKNAVRDTELSGWWDNGDNQISFCRGNKGFLAVNNNLYDLSQELNTCLPAGEYCDVISGSLVDGACTGKSVTVNEHGYGYIHIGSDDFDGVLALHVNAKV.

A signal peptide spans 1-20 (MIKFALALTLCLAGASLSLA). Gln21 is subject to Pyrrolidone carboxylic acid. A disulfide bond links Cys48 and Cys104. Ca(2+)-binding residues include Asn118, Gln169, and Asp178. A disulfide bridge links Cys157 with Cys171. A chloride-binding site is contributed by Arg206. Asp208 acts as the Nucleophile in catalysis. His212 lines the Ca(2+) pocket. Glu245 serves as the catalytic Proton donor. Residues Asn308 and Arg343 each contribute to the chloride site. 3 disulfide bridges follow: Cys376–Cys382, Cys418–Cys441, and Cys448–Cys460.

Belongs to the glycosyl hydrolase 13 family. As to quaternary structure, monomer. The cofactor is Ca(2+). Chloride serves as cofactor.

Its subcellular location is the secreted. It carries out the reaction Endohydrolysis of (1-&gt;4)-alpha-D-glucosidic linkages in polysaccharides containing three or more (1-&gt;4)-alpha-linked D-glucose units.. The chain is Alpha-amylase-related protein (Amyrel) from Drosophila bakoue (Fruit fly).